Consider the following 277-residue polypeptide: Transcription factor HES-4-B (277 aa).

The tract at residues 1-44 is disordered; sequence MPADSMEKPTASPIAGAPANSAQTPDKPKSASEHRKSSKPIMEK. Over residues 26-35 the composition is skewed to basic and acidic residues; sequence DKPKSASEHR. The 58-residue stretch at 34-91 folds into the bHLH domain; the sequence is HRKSSKPIMEKRRRARINESLGQLKTLILDALKKDSSRHSKLEKADILEMTVKHLRNL. The 34-residue stretch at 110 to 143 folds into the Orange domain; sequence YRAGFNECMNEVTRFLSTCEGVNTEVRTRLLGHL. Residues 258-277 form a disordered region; sequence VSPLGGSTRADSAESVWRPW. Residues 274–277 carry the WRPW motif motif; it reads WRPW.

In terms of assembly, transcription repression requires formation of a complex with a corepressor protein of the Groucho/TLE family. Interacts with the bHLH protein hes6; this interaction may inhibit the transcriptional repressor activity. Binds DNA in the form of a heterodimer with the bHLH protein hey1/hrt1. Interacts (via Orange domain) with id3 (via HLH domain). As to expression, dynamically expressed in the borders of several tissue territories. Expressed in the pre-placodal ectoderm (PPE) from gastrula stage. During gastrulation, expressed in the deep layer of the dorsal lip, the Spemann organizer and three distinct regions in the prospective neuroectoderm: neural plate border, presumptive floor plate/notoplate and anterior neural plate. At later stages, expression is localized to the anterior of the prechordal plate, the presomitic mesoderm, neural tube, neural crest derivatives and several tissues of the central nervous system, with expression in the developing floor plate continues to at least the tadpole stage. From the early tailbud stage, expressed in the dorsoanterior region of the developing pronephros. During early tailbud stages, broadly expressed within the pronephric mesoderm. and in the sensorial layer of the ectoderm covering the pronephros anlagen. During late tailbud to early tadpole stages, expressed in the ventral region of the pronephros. Expression remains in the proximal and distal tubules at late tadpole stages (stage 35).

Its subcellular location is the nucleus. In terms of biological role, transcriptional repressor. Binds DNA on N-box motifs: 5'-CACNAG-3'. Promotes floor plate development and prechordal plate development. Required for lens development as early as the stage of lens field formation, partly through regulation of gene expression of the cell cycle inhibitor cdknx/p27(xic1). Required for formation of the neural crest downstream of multiple signaling pathways, and acts at the neural plate border via both DNA-binding dependent and independent mechanisms; acts in a DNA-binding dependent manner to repress pro-apoptotic and neural crest differentiation genes, including id3, delta1, and cdknx/p27(xic1), and thus promote the cell survival of neural plate border cells and maintain them in an undifferentiated state. Represses transcription of id3, at least in part through the repression of bmp4. On the other hand, acts in a DNA-independent manner separate from the transcriptional repressor function, to stimulate cell proliferation and promote neural crest formation. Via this DNA-independent route, acts in neurulae upstream of stat3 to transiently up-regulate the notch ligand dll1/delta1, which in turn up-regulates id3 expression. Then interacts directly with id3, which blocks the transcriptional repressor function of hes4-B/hairy2b to allow the progression of neural crest progenitors through specification and differentiation. Also acts via repressor-dependent and repressor-independent mechanisms in early gastrulae to establish the prospective anterior prechordal mesoderm identity in the Spemann organizer; induces specific genes independently from direct transcriptional regulation, and represses the genes specific for neighboring tissues through direct transcriptional repression. Modulates lateral inhibition during notch signaling and regulates the cell context dependent effects of notch (which can have inhibitory, permissive or enhancing roles in muscle or neural differentiation). Inhibits myogenesis. This chain is Transcription factor HES-4-B (hes4-b), found in Xenopus laevis (African clawed frog).